Consider the following 235-residue polypeptide: Protocatechuate 3,4-dioxygenase beta chain (235 aa).

Tyrosine 107, tyrosine 146, histidine 159, and histidine 161 together coordinate Fe cation.

Belongs to the intradiol ring-cleavage dioxygenase family. As to quaternary structure, the enzyme is an oligomer of 12 copies of the alpha and beta chains. The cofactor is Fe(3+).

It carries out the reaction 3,4-dihydroxybenzoate + O2 = 3-carboxy-cis,cis-muconate + 2 H(+). It participates in aromatic compound metabolism; beta-ketoadipate pathway; 3-carboxy-cis,cis-muconate from 3,4-dihydroxybenzoate: step 1/1. In terms of biological role, plays an essential role in the utilization of numerous aromatic and hydroaromatic compounds via the beta-ketoadipate pathway. The protein is Protocatechuate 3,4-dioxygenase beta chain (pcaH) of Burkholderia cepacia (Pseudomonas cepacia).